The following is a 122-amino-acid chain: Iron-sulfur cluster insertion protein ErpA (122 aa).

3 residues coordinate iron-sulfur cluster: C50, C114, and C116.

Belongs to the HesB/IscA family. Homodimer. The cofactor is iron-sulfur cluster.

Required for insertion of 4Fe-4S clusters for at least IspG. The protein is Iron-sulfur cluster insertion protein ErpA of Alkalilimnicola ehrlichii (strain ATCC BAA-1101 / DSM 17681 / MLHE-1).